The sequence spans 257 residues: Type III pantothenate kinase (257 aa).

6 to 13 (DVGNTSTK) contributes to the ATP binding site. Substrate is bound at residue 109 to 112 (GADR). Asp111 functions as the Proton acceptor in the catalytic mechanism. Asp132 provides a ligand contact to K(+). Residue Thr135 participates in ATP binding. Thr187 is a substrate binding site.

It belongs to the type III pantothenate kinase family. Homodimer. The cofactor is NH4(+). K(+) serves as cofactor.

It localises to the cytoplasm. It catalyses the reaction (R)-pantothenate + ATP = (R)-4'-phosphopantothenate + ADP + H(+). It functions in the pathway cofactor biosynthesis; coenzyme A biosynthesis; CoA from (R)-pantothenate: step 1/5. Catalyzes the phosphorylation of pantothenate (Pan), the first step in CoA biosynthesis. The chain is Type III pantothenate kinase from Anaplasma marginale (strain St. Maries).